Consider the following 141-residue polypeptide: Putative pre-16S rRNA nuclease (141 aa).

The protein belongs to the YqgF nuclease family.

The protein localises to the cytoplasm. Its function is as follows. Could be a nuclease involved in processing of the 5'-end of pre-16S rRNA. The protein is Putative pre-16S rRNA nuclease of Aliivibrio salmonicida (strain LFI1238) (Vibrio salmonicida (strain LFI1238)).